Here is a 209-residue protein sequence, read N- to C-terminus: Orotate phosphoribosyltransferase (209 aa).

Residues R96, K100, H102, and 122–130 (EDLISTGGS) each bind 5-phospho-alpha-D-ribose 1-diphosphate. S126 contacts orotate.

The protein belongs to the purine/pyrimidine phosphoribosyltransferase family. PyrE subfamily. In terms of assembly, homodimer. The cofactor is Mg(2+).

It carries out the reaction orotidine 5'-phosphate + diphosphate = orotate + 5-phospho-alpha-D-ribose 1-diphosphate. Its pathway is pyrimidine metabolism; UMP biosynthesis via de novo pathway; UMP from orotate: step 1/2. Catalyzes the transfer of a ribosyl phosphate group from 5-phosphoribose 1-diphosphate to orotate, leading to the formation of orotidine monophosphate (OMP). The polypeptide is Orotate phosphoribosyltransferase (Lactococcus lactis subsp. cremoris (strain SK11)).